Here is a 581-residue protein sequence, read N- to C-terminus: Putative protein phosphatase 2C 22 (581 aa).

The signal sequence occupies residues 1–21 (MVISVPLFSSVLLALVVAVPA). Positions 102-478 (KYASSAMQGL…NNATAILVQF (377 aa)) constitute a PPM-type phosphatase domain. Positions 138, 139, 373, and 469 each coordinate Mn(2+). The tract at residues 538 to 563 (SDEVAGGAAVAEQHQHNPEGGGEQQL) is disordered.

Belongs to the PP2C family. Mg(2+) serves as cofactor. It depends on Mn(2+) as a cofactor.

It carries out the reaction O-phospho-L-seryl-[protein] + H2O = L-seryl-[protein] + phosphate. It catalyses the reaction O-phospho-L-threonyl-[protein] + H2O = L-threonyl-[protein] + phosphate. The sequence is that of Putative protein phosphatase 2C 22 from Oryza sativa subsp. japonica (Rice).